A 209-amino-acid polypeptide reads, in one-letter code: Protein GrpE (209 aa).

Residues 1–13 are compositionally biased toward polar residues; that stretch reads MSNDSSKAKQNQV. The disordered stretch occupies residues 1-27; that stretch reads MSNDSSKAKQNQVDEAVEGEIITDNEN. Residues 15 to 27 are compositionally biased toward acidic residues; that stretch reads EAVEGEIITDNEN.

It belongs to the GrpE family. As to quaternary structure, homodimer.

Its subcellular location is the cytoplasm. Its function is as follows. Participates actively in the response to hyperosmotic and heat shock by preventing the aggregation of stress-denatured proteins, in association with DnaK and GrpE. It is the nucleotide exchange factor for DnaK and may function as a thermosensor. Unfolded proteins bind initially to DnaJ; upon interaction with the DnaJ-bound protein, DnaK hydrolyzes its bound ATP, resulting in the formation of a stable complex. GrpE releases ADP from DnaK; ATP binding to DnaK triggers the release of the substrate protein, thus completing the reaction cycle. Several rounds of ATP-dependent interactions between DnaJ, DnaK and GrpE are required for fully efficient folding. The chain is Protein GrpE from Shewanella sediminis (strain HAW-EB3).